A 354-amino-acid polypeptide reads, in one-letter code: Guanine nucleotide-binding protein G(t) subunit alpha-2 (354 aa).

The interval 1 to 27 (MGSGASAEDKELAKRSKELEKKLQEDA) is disordered. A lipid anchor (N-myristoyl glycine) is attached at Gly-2. Residues 7 to 27 (AEDKELAKRSKELEKKLQEDA) are compositionally biased toward basic and acidic residues. The 323-residue stretch at 32–354 (KTVKLLLLGA…KENLKDCGLF (323 aa)) folds into the G-alpha domain. Residues 35–48 (KLLLLGAGESGKST) are G1 motif. GTP-binding positions include 40-47 (GAGESGKS), 175-181 (LRSRVKT), 200-204 (DVGGQ), 269-272 (NKKD), and Ala-326. Residues Ser-47 and Thr-181 each contribute to the Mg(2+) site. Residues 173–181 (DVLRSRVKT) are G2 motif. The segment at 196 to 205 (FRMFDVGGQR) is G3 motif. A G4 motif region spans residues 265-272 (VLFLNKKD). The segment at 324 to 329 (TCATDT) is G5 motif.

It belongs to the G-alpha family. G(i/o/t/z) subfamily. In terms of assembly, g proteins are composed of 3 units; alpha, beta and gamma. The alpha chain contains the guanine nucleotide binding site. In terms of tissue distribution, retinal rod outer segment.

It is found in the cell projection. Its subcellular location is the cilium. The protein resides in the photoreceptor outer segment. The protein localises to the photoreceptor inner segment. Functionally, guanine nucleotide-binding proteins (G proteins) are involved as modulators or transducers in various transmembrane signaling systems. Transducin is an amplifier and one of the transducers of a visual impulse that performs the coupling between rhodopsin and cGMP-phosphodiesterase. This is Guanine nucleotide-binding protein G(t) subunit alpha-2 (GNAT2) from Bos taurus (Bovine).